We begin with the raw amino-acid sequence, 342 residues long: MSEVIKSVPPGSQNTSQWIISKDQLVFTPSALDGIPLDQEEIQRSKGCNFIINVGLRLKLPQTALATANIYFHRFYLRFSLKNYHYYEVAATCIFLATKVEDSVRKLRDIVINCAKVAQKNSNVLVDEQTKEYWRWRDVILYTEEVLLEALCFDFTVEHPYPYVLSFIKKFVADDKNVTKVAWTYINDSTRSIACLLYSPKTIAAAAFQFALEKNEINLSTTTDGLPVWMEESQVSYEDVKGVLTLIDSLYKKINPSKQALPIDQKNGSHASSVAPGTPSSLASVSTQATPQHQNSSGRTDSFHSLNTETPSKSTVDDQILSTAAQPKKSSDTDKEMETEAS.

The tract at residues 261–342 (LPIDQKNGSH…TDKEMETEAS (82 aa)) is disordered. The span at 278-314 (TPSSLASVSTQATPQHQNSSGRTDSFHSLNTETPSKS) shows a compositional bias: polar residues. Phosphothreonine is present on threonine 300. Serine 302 bears the Phosphoserine mark. The span at 329–342 (KSSDTDKEMETEAS) shows a compositional bias: basic and acidic residues.

The protein belongs to the cyclin family. Cyclin C subfamily. As to quaternary structure, interacts with cdc2 protein kinase and with the N-terminal domain of cdk9.

It localises to the nucleus. Its function is as follows. Essential for progression through the whole cell cycle. This is Cyclin pch1 (pch1) from Schizosaccharomyces pombe (strain 972 / ATCC 24843) (Fission yeast).